We begin with the raw amino-acid sequence, 129 residues long: Cocaine- and amphetamine-regulated transcript protein (129 aa).

A signal peptide spans 1–27; that stretch reads MESSRLRLLPVLGAALLLLLPLLGAGA. Tyr-41 carries the post-translational modification Phosphotyrosine. Ser-48 carries the phosphoserine modification. 3 disulfides stabilise this stretch: Cys-95–Cys-113, Cys-101–Cys-121, and Cys-115–Cys-128.

This sequence belongs to the CART family. In terms of tissue distribution, neuroendocrine tissues. Predominantly expressed in the hypothalamus, pituitary, and longitudinal muscle-myenteric plexus. Abundant expression is also seen in the midbrain/thalamus and eye. A lower level expression is seen in the other brain regions and adrenal.

Its subcellular location is the secreted. In terms of biological role, satiety factor closely associated with the actions of leptin and neuropeptide y; this anorectic peptide inhibits both normal and starvation-induced feeding and completely blocks the feeding response induced by neuropeptide Y and regulated by leptin in the hypothalamus. The protein is Cocaine- and amphetamine-regulated transcript protein (Cartpt) of Rattus norvegicus (Rat).